We begin with the raw amino-acid sequence, 143 residues long: MLMRTDPFREFDRITRELTAPGTWSRPTAMPMDACREGDTYVVSFDLPGVDPEAIEIDIERNMLTVKAERGPAGNAEHVRMEVAERPLGVFSRQLVLADTLDTEQVRADYDAGVLTLRIPIAERAKRRRVKVGQGESHRQITG.

A sHSP domain is found at 23 to 135 (TWSRPTAMPM…KRRRVKVGQG (113 aa)).

Belongs to the small heat shock protein (HSP20) family.

The polypeptide is 18 kDa heat shock protein (hsp18) (Streptomyces albus G).